Reading from the N-terminus, the 369-residue chain is 4-hydroxy-3-methylbut-2-en-1-yl diphosphate synthase (flavodoxin) (369 aa).

Positions 270, 273, 305, and 312 each coordinate [4Fe-4S] cluster.

Belongs to the IspG family. [4Fe-4S] cluster serves as cofactor.

It carries out the reaction (2E)-4-hydroxy-3-methylbut-2-enyl diphosphate + oxidized [flavodoxin] + H2O + 2 H(+) = 2-C-methyl-D-erythritol 2,4-cyclic diphosphate + reduced [flavodoxin]. It participates in isoprenoid biosynthesis; isopentenyl diphosphate biosynthesis via DXP pathway; isopentenyl diphosphate from 1-deoxy-D-xylulose 5-phosphate: step 5/6. Functionally, converts 2C-methyl-D-erythritol 2,4-cyclodiphosphate (ME-2,4cPP) into 1-hydroxy-2-methyl-2-(E)-butenyl 4-diphosphate. In Pseudomonas putida (strain ATCC 47054 / DSM 6125 / CFBP 8728 / NCIMB 11950 / KT2440), this protein is 4-hydroxy-3-methylbut-2-en-1-yl diphosphate synthase (flavodoxin).